Here is a 203-residue protein sequence, read N- to C-terminus: CASP-like protein 2U5 (203 aa).

Topologically, residues 1-31 (MSEHRIPVAADKQISPPISAGEQKGCKGLKR) are cytoplasmic. A helical transmembrane segment spans residues 32–52 (TDLMLRFAAFVCCAVTMVVLI). Over 53–84 (TDKQTSAIQVPGFNNLTITKTVSFDLAKAFVY) the chain is Extracellular. Asparagine 67 is a glycosylation site (N-linked (GlcNAc...) asparagine). Residues 85-105 (LVSAAGIGAGYTLLVLVLSII) form a helical membrane-spanning segment. Topologically, residues 106–111 (SAERSK) are cytoplasmic. A helical membrane pass occupies residues 112–132 (AIAWFIFVFDQLITYVLLAAA). Topologically, residues 133–164 (AASTEVAYMGAHAPPEASWLKVCSLFGRFCHQ) are extracellular. The helical transmembrane segment at 165-185 (LGASLVTSFISTVLFAFSAAI) threads the bilayer. The Cytoplasmic portion of the chain corresponds to 186 to 203 (SAYYLFSNTNVRPAYSKG).

This sequence belongs to the Casparian strip membrane proteins (CASP) family. In terms of assembly, homodimer and heterodimers.

Its subcellular location is the cell membrane. In Selaginella moellendorffii (Spikemoss), this protein is CASP-like protein 2U5.